Reading from the N-terminus, the 101-residue chain is Urease subunit beta (101 aa).

It belongs to the urease beta subunit family. In terms of assembly, heterotrimer of UreA (gamma), UreB (beta) and UreC (alpha) subunits. Three heterotrimers associate to form the active enzyme.

It is found in the cytoplasm. It catalyses the reaction urea + 2 H2O + H(+) = hydrogencarbonate + 2 NH4(+). It participates in nitrogen metabolism; urea degradation; CO(2) and NH(3) from urea (urease route): step 1/1. This chain is Urease subunit beta, found in Mesorhizobium japonicum (strain LMG 29417 / CECT 9101 / MAFF 303099) (Mesorhizobium loti (strain MAFF 303099)).